The following is a 367-amino-acid chain: MEQYKFILSGGGTGGHIYPAIAIANELKSRFPNCKILFVGAKDKMEMQKVPQAGYDIKGLSIAGLQRKITLQNAMFPFKLLSSLVKSFGIVQQFKPDVVIGTGGFASGAVLKVASILGIATVIQEQNSYPGITNKLLSKKANKICVAYENLEQFFPKDKMILTGNPVRQDLISVDGKRNEAIDYFKLDANKKTILILGGSLGARRINQLIAKEIDWLLSQNVQIIWQCGKLYFEDYKPFSGKENVQILSFIDRMDLVYAAADIVISRSGASSVSELAIVGKPVIFIPSPNVAEDHQTKNAQAIVNKQGAILLKESQLDSEFKFVFESLLNDKAKQEDLSKNIKQLALPNATKDIVDEIIKLVESQKS.

UDP-N-acetyl-alpha-D-glucosamine is bound by residues 13–15 (TGG), Asn127, Arg168, Ser200, Ile251, and Gln296.

The protein belongs to the glycosyltransferase 28 family. MurG subfamily.

Its subcellular location is the cell inner membrane. It carries out the reaction di-trans,octa-cis-undecaprenyl diphospho-N-acetyl-alpha-D-muramoyl-L-alanyl-D-glutamyl-meso-2,6-diaminopimeloyl-D-alanyl-D-alanine + UDP-N-acetyl-alpha-D-glucosamine = di-trans,octa-cis-undecaprenyl diphospho-[N-acetyl-alpha-D-glucosaminyl-(1-&gt;4)]-N-acetyl-alpha-D-muramoyl-L-alanyl-D-glutamyl-meso-2,6-diaminopimeloyl-D-alanyl-D-alanine + UDP + H(+). Its pathway is cell wall biogenesis; peptidoglycan biosynthesis. In terms of biological role, cell wall formation. Catalyzes the transfer of a GlcNAc subunit on undecaprenyl-pyrophosphoryl-MurNAc-pentapeptide (lipid intermediate I) to form undecaprenyl-pyrophosphoryl-MurNAc-(pentapeptide)GlcNAc (lipid intermediate II). The sequence is that of UDP-N-acetylglucosamine--N-acetylmuramyl-(pentapeptide) pyrophosphoryl-undecaprenol N-acetylglucosamine transferase from Flavobacterium psychrophilum (strain ATCC 49511 / DSM 21280 / CIP 103535 / JIP02/86).